We begin with the raw amino-acid sequence, 272 residues long: Shikimate dehydrogenase (NADP(+)) (272 aa).

Residues 14-16 (SKS) and T61 each bind shikimate. Residue K65 is the Proton acceptor of the active site. E77 contributes to the NADP(+) binding site. 2 residues coordinate shikimate: N86 and D102. NADP(+)-binding positions include 126 to 130 (GAGGA), 149 to 154 (NRTASR), and M213. Y215 contacts shikimate. G237 contributes to the NADP(+) binding site.

Belongs to the shikimate dehydrogenase family. In terms of assembly, homodimer.

It catalyses the reaction shikimate + NADP(+) = 3-dehydroshikimate + NADPH + H(+). Its pathway is metabolic intermediate biosynthesis; chorismate biosynthesis; chorismate from D-erythrose 4-phosphate and phosphoenolpyruvate: step 4/7. Involved in the biosynthesis of the chorismate, which leads to the biosynthesis of aromatic amino acids. Catalyzes the reversible NADPH linked reduction of 3-dehydroshikimate (DHSA) to yield shikimate (SA). The protein is Shikimate dehydrogenase (NADP(+)) of Salmonella schwarzengrund (strain CVM19633).